Here is a 115-residue protein sequence, read N- to C-terminus: Ribosome-binding factor A (115 aa).

Belongs to the RbfA family. In terms of assembly, monomer. Binds 30S ribosomal subunits, but not 50S ribosomal subunits or 70S ribosomes.

It is found in the cytoplasm. One of several proteins that assist in the late maturation steps of the functional core of the 30S ribosomal subunit. Associates with free 30S ribosomal subunits (but not with 30S subunits that are part of 70S ribosomes or polysomes). Required for efficient processing of 16S rRNA. May interact with the 5'-terminal helix region of 16S rRNA. This chain is Ribosome-binding factor A, found in Bacillus velezensis (strain DSM 23117 / BGSC 10A6 / LMG 26770 / FZB42) (Bacillus amyloliquefaciens subsp. plantarum).